Reading from the N-terminus, the 788-residue chain is Protein translocase subunit SecA 2 (788 aa).

ATP contacts are provided by residues Gln86, 104–108 (GEGKT), and Asp493.

The protein belongs to the SecA family. In terms of assembly, monomer and homodimer. Part of the essential Sec protein translocation apparatus which comprises SecA, SecYEG and auxiliary proteins SecDF. Other proteins may also be involved.

The protein localises to the cell membrane. It is found in the cytoplasm. The enzyme catalyses ATP + H2O + cellular proteinSide 1 = ADP + phosphate + cellular proteinSide 2.. Its function is as follows. Part of the Sec protein translocase complex. Interacts with the SecYEG preprotein conducting channel. Has a central role in coupling the hydrolysis of ATP to the transfer of proteins into and across the cell membrane, serving as an ATP-driven molecular motor driving the stepwise translocation of polypeptide chains across the membrane. This chain is Protein translocase subunit SecA 2, found in Bacillus thuringiensis (strain Al Hakam).